The primary structure comprises 420 residues: L-rhamnose isomerase (420 aa).

Mn(2+) contacts are provided by H264, D296, and D298.

Belongs to the rhamnose isomerase family. It depends on Mn(2+) as a cofactor.

It localises to the cytoplasm. The enzyme catalyses L-rhamnopyranose = L-rhamnulose. Its pathway is carbohydrate degradation; L-rhamnose degradation; glycerone phosphate from L-rhamnose: step 1/3. In terms of biological role, catalyzes the interconversion of L-rhamnose and L-rhamnulose. The sequence is that of L-rhamnose isomerase from Listeria monocytogenes serotype 4b (strain F2365).